The primary structure comprises 426 residues: Serine hydroxymethyltransferase (426 aa).

Residues leucine 111 and 115–117 (GHL) each bind (6S)-5,6,7,8-tetrahydrofolate. An N6-(pyridoxal phosphate)lysine modification is found at lysine 220.

The protein belongs to the SHMT family. In terms of assembly, homodimer. Pyridoxal 5'-phosphate serves as cofactor.

Its subcellular location is the cytoplasm. It carries out the reaction (6R)-5,10-methylene-5,6,7,8-tetrahydrofolate + glycine + H2O = (6S)-5,6,7,8-tetrahydrofolate + L-serine. It functions in the pathway one-carbon metabolism; tetrahydrofolate interconversion. It participates in amino-acid biosynthesis; glycine biosynthesis; glycine from L-serine: step 1/1. Its function is as follows. Catalyzes the reversible interconversion of serine and glycine with tetrahydrofolate (THF) serving as the one-carbon carrier. This reaction serves as the major source of one-carbon groups required for the biosynthesis of purines, thymidylate, methionine, and other important biomolecules. Also exhibits THF-independent aldolase activity toward beta-hydroxyamino acids, producing glycine and aldehydes, via a retro-aldol mechanism. This Orientia tsutsugamushi (strain Ikeda) (Rickettsia tsutsugamushi) protein is Serine hydroxymethyltransferase.